We begin with the raw amino-acid sequence, 497 residues long: Taxane 10-beta-hydroxylase (497 aa).

Cys443 lines the heme pocket.

The protein belongs to the cytochrome P450 family. The cofactor is heme.

It carries out the reaction taxa-4(20),11-dien-5alpha-yl acetate + reduced [NADPH--hemoprotein reductase] + O2 = 10beta-hydroxytaxa-4(20),11-dien-5alpha-yl acetate + oxidized [NADPH--hemoprotein reductase] + H2O + H(+). It participates in alkaloid biosynthesis; taxol biosynthesis; 10-deacetyl-2-debenzoylbaccatin III from taxa-4(20),11-dien-5alpha-ol: step 2/3. In terms of biological role, involved in the transformation of a taxadienyl acetate by hydroxylation at C10 to yield taxadien-5-alpha-acetoxy-10-beta-ol. This is Taxane 10-beta-hydroxylase (CYP725A1) from Taxus cuspidata (Japanese yew).